Here is a 374-residue protein sequence, read N- to C-terminus: Putative glutamate--cysteine ligase 2 (374 aa).

The protein belongs to the glutamate--cysteine ligase type 2 family. YbdK subfamily.

It carries out the reaction L-cysteine + L-glutamate + ATP = gamma-L-glutamyl-L-cysteine + ADP + phosphate + H(+). ATP-dependent carboxylate-amine ligase which exhibits weak glutamate--cysteine ligase activity. The sequence is that of Putative glutamate--cysteine ligase 2 from Verminephrobacter eiseniae (strain EF01-2).